The following is a 185-amino-acid chain: TATA-box-binding protein 3 (185 aa).

2 consecutive repeat copies span residues 7–84 (IENV…ANKL) and 100–178 (VQNI…RKEF).

The protein belongs to the TBP family.

General factor that plays a role in the activation of archaeal genes transcribed by RNA polymerase. Binds specifically to the TATA box promoter element which lies close to the position of transcription initiation. This is TATA-box-binding protein 3 from Methanosarcina acetivorans (strain ATCC 35395 / DSM 2834 / JCM 12185 / C2A).